A 259-amino-acid chain; its full sequence is Tryptophan synthase alpha chain (259 aa).

Catalysis depends on proton acceptor residues E35 and D46.

Belongs to the TrpA family. As to quaternary structure, tetramer of two alpha and two beta chains.

The catalysed reaction is (1S,2R)-1-C-(indol-3-yl)glycerol 3-phosphate + L-serine = D-glyceraldehyde 3-phosphate + L-tryptophan + H2O. Its pathway is amino-acid biosynthesis; L-tryptophan biosynthesis; L-tryptophan from chorismate: step 5/5. In terms of biological role, the alpha subunit is responsible for the aldol cleavage of indoleglycerol phosphate to indole and glyceraldehyde 3-phosphate. This Methanococcus maripaludis (strain C7 / ATCC BAA-1331) protein is Tryptophan synthase alpha chain.